Reading from the N-terminus, the 964-residue chain is MELISRVFTHGENILLVSSTNKLYIMGNNEYGSCGFKIGTDKTYIESPVYIDIKLDDDDSVKAFYSCNLFTMIHTSKGKIYLSRSFICGGGEIDAYDSESDVGSDAESDAESDAESDSENHTQNNTNTPINNITLINLDSSNNSTQSDNESDNESDNESDNESDQSCSDFDCGPRSDNESDEEVFVDRNDNNSDNIGNSNSIDNESESMTEKAGIILLNEIKTMVDEILSQKNINSVGINDIVIRPSGQYVSNMGYITESGSVSFHTNKNGFLLFKSNVHEILFVEEMFMYSKNNFIYLAIPFKKYQASLRDIAPFHTINKTKNGIKWKYFKIVFPFDTEKIEFCDNFFYTYESNTCYHHVISFYKNVNYYPSWIYFKSEIDINSKNMFFSSDTNSVYVKDNNNVYKYHNFNNSLEKYIDNKLDLDVVIVPDSYRPMEMRLLLKLGITLYSDYNFNGCEDDEEHIFEIMKNQYVPHIIGLNYFESFIVVIVNNPNMLTITTDDGKIFFNIHDITFYKRFYNGIVYLDNGSLFYLTDSEISDQNVWKLTGCQLCELADSTIYSYLFNLPDKIDEIYSSSEFIVLKLIGNKYFYYPVENFDTAQDFKTRCGEISLKNNSVLELVNTSIINRQSKSYHTTVSINIDTDCTTHNSFERLFILTQSLSYSAEYSIRIVDDKNIGFGDGPKIEFCESAIMQFYYKYLIAHNFHTEFNLQEFAKLKPTEIKYLGSMFHMVICQNNSSLPIRLPLAFAVEIYGKEPTIDELEYFACNEDETGFKHIYPAKYNPELVKEFGYESYEHCLKTLCKYNYEDDTDKNILTKKYCEQLAAGFKRYGNIKNIKQMNLPTLDYYISGPYKINRTILINNLVLSGGKDKNNNYLEMFKEFINSLSENELKILLKNWTASTCVRPDNKYRIIIISKSKNAKAGIRFGTCNLEIHIDEKMLDEHNIDTVKEVLITPAQGFKD.

The span at 97 to 117 (DSESDVGSDAESDAESDAESD) shows a compositional bias: acidic residues. The disordered stretch occupies residues 97–208 (DSESDVGSDA…SNSIDNESES (112 aa)). A compositionally biased stretch (low complexity) spans 121–148 (HTQNNTNTPINNITLINLDSSNNSTQSD). Acidic residues predominate over residues 149 to 163 (NESDNESDNESDNES). Residues 192–203 (NSDNIGNSNSID) are compositionally biased toward low complexity.

This is an uncharacterized protein from Acanthamoeba polyphaga (Amoeba).